Consider the following 247-residue polypeptide: Large ribosomal subunit protein uL3 (247 aa).

Disordered stretches follow at residues 140–164 (SHRS…KMPG) and 212–247 (LPKE…KEGA). At Gln-151 the chain carries N5-methylglutamine. Residues 232–247 (DEDKAPADTPAEKEGA) are compositionally biased toward basic and acidic residues.

The protein belongs to the universal ribosomal protein uL3 family. As to quaternary structure, part of the 50S ribosomal subunit. Forms a cluster with proteins L14 and L19. Post-translationally, methylated by PrmB.

Its function is as follows. One of the primary rRNA binding proteins, it binds directly near the 3'-end of the 23S rRNA, where it nucleates assembly of the 50S subunit. The protein is Large ribosomal subunit protein uL3 of Nitrobacter winogradskyi (strain ATCC 25391 / DSM 10237 / CIP 104748 / NCIMB 11846 / Nb-255).